Consider the following 56-residue polypeptide: Ovomucoid (56 aa).

One can recognise a Kazal-like domain in the interval 6 to 56 (VDCSEYPKPECTAEERPICGSDNKTYGNKCNFCNAVVESNGTLTLRNFGKC). 3 disulfides stabilise this stretch: C8-C38, C16-C35, and C24-C56. N-linked (GlcNAc...) asparagine glycosylation occurs at N45.

It is found in the secreted. The chain is Ovomucoid from Bambusicola thoracicus (Chinese bamboo-partridge).